The sequence spans 578 residues: SCARECROW-LIKE protein 7 (578 aa).

Over residues 18–29 (VIQQQQQQQQQQ) the composition is skewed to low complexity. Disordered stretches follow at residues 18–84 (VIQQ…LAYG) and 146–173 (PPPP…APRP). Residues 49-61 (PHHHQQKHHHHHQ) are compositionally biased toward basic residues. The span at 62-74 (QMPAMPQAPPSSH) shows a compositional bias: low complexity. A compositionally biased stretch (pro residues) spans 146 to 156 (PPPPVPSPPPT). The segment covering 157 to 173 (HAAATATATAATAAPRP) has biased composition (low complexity). The region spanning 198 to 578 (SADASCSAPI…RPLLTVSAWR (381 aa)) is the GRAS domain. The tract at residues 205 to 264 (APILQSLLSCSRAAATDPGLAAAELASVRAAATDAGDPSERLAFYFADALSRRLACGTGA) is leucine repeat I (LRI). The segment at 283 to 349 (YKTLNDACPY…GKPTRIRITG (67 aa)) is VHIID. Positions 314–318 (IHIVD) match the VHIID motif. A leucine repeat II (LRII) region spans residues 365-397 (ATNTRLRDFAKLLGVDFEFVPLLRPVHELNKSD). A PFYRE region spans residues 406–497 (VAVNFMLQLY…RWMFGERIQR (92 aa)). Residues 414 to 418 (LYHLL) carry the LXXLL motif motif. Residues 500 to 578 (GPEEGADRTE…RPLLTVSAWR (79 aa)) are SAW.

The protein belongs to the GRAS family. As to quaternary structure, homodimer.

It is found in the nucleus. Its function is as follows. Probable transcription factor involved in plant development. Involved in environmental abiotic stress resistance. May increase the expression of stress-responsive genes. Binds DNA in vitro. The protein is SCARECROW-LIKE protein 7 of Oryza sativa subsp. japonica (Rice).